Reading from the N-terminus, the 1520-residue chain is Myosin-5 (1520 aa).

The 50-residue stretch at 7–56 (IVGSHVWVEDPHLAWIDGEVTRIDGINVHVKTKKGKTVVTNVYFPKDTEA) folds into the Myosin N-terminal SH3-like domain. Positions 59–729 (GGVDDMTKLS…QMAELDARRA (671 aa)) constitute a Myosin motor domain. Residues 153–160 (GESGAGKT) and 206–214 (NNNSSRFGK) each bind ATP. Actin-binding regions lie at residues 492 to 526 (LIEK…FQTF), 528 to 551 (EHER…AGEV), 586 to 610 (FHAL…KQQL), and 610 to 632 (LHSL…KPNN). IQ domains lie at 732-761 (LGNA…AAIV), 755-784 (IRNA…EAAA), 780-809 (IEAA…STIV), 803-832 (TRSS…RKAA), 828-857 (QRKA…AAIV), and 851-880 (LQKA…AARD). Positions 881–1047 (TGALKDAKNK…ESENKVLRQQ (167 aa)) form a coiled coil. The tract at residues 1062-1100 (PKTTIIQRTPEKDTFSNGETTQLQEPETEDRPQKSLNQK) is disordered. A compositionally biased stretch (polar residues) spans 1076-1086 (FSNGETTQLQE). The region spanning 1148 to 1463 (NRIIETIASA…IATMRAEVSD (316 aa)) is the Dilute domain.

Belongs to the TRAFAC class myosin-kinesin ATPase superfamily. Myosin family. Plant myosin class XI subfamily. Homodimer. Interacts with MYOB1 and MYOB2. Interacts with PHOX1.

It is found in the cytoplasm. Functionally, myosin heavy chain that is required for the cell cycle-regulated transport of various organelles and proteins for their segregation. Functions by binding with its tail domain to receptor proteins on organelles and exerting force with its N-terminal motor domain against actin filaments, thereby transporting its cargo along polarized actin cables. Contributes to the trafficking of Golgi stacks, mitochondria and peroxisomes. Required for development of pavement cells, trichomes, and stigmatic papillae. This Arabidopsis thaliana (Mouse-ear cress) protein is Myosin-5 (XI-1).